The following is a 165-amino-acid chain: Cysteine and tyrosine-rich protein 1 (165 aa).

The signal sequence occupies residues 1 to 29 (MDALRLPRRPGVLLPKLILLFVYAGDCLA). Over 30 to 61 (QCGKECHSYCCDGSTPYCCSYYAYIGNILSGT) the chain is Extracellular. A helical transmembrane segment spans residues 62–82 (AIAGIVFGIVFIMGVIAGIAI). The Cytoplasmic segment spans residues 83-165 (CICMCMKNNR…SSSQNRIRDN (83 aa)). The tract at residues 125-165 (RTDLPPPYSAAPQASAQRSPPPPYPGNPRKYSSSQNRIRDN) is disordered. Residues 154–165 (KYSSSQNRIRDN) show a composition bias toward polar residues.

The protein belongs to the CYYR1 family.

The protein localises to the membrane. This chain is Cysteine and tyrosine-rich protein 1 (Cyyr1), found in Mus musculus (Mouse).